The sequence spans 173 residues: NADH-ubiquinone oxidoreductase chain 6 (173 aa).

Helical transmembrane passes span Met-1–Ser-21, Tyr-27–Gly-47, Val-48–Val-68, Val-87–Phe-107, and Cys-139–Leu-159.

This sequence belongs to the complex I subunit 6 family.

The protein localises to the mitochondrion membrane. It catalyses the reaction a ubiquinone + NADH + 5 H(+)(in) = a ubiquinol + NAD(+) + 4 H(+)(out). In terms of biological role, core subunit of the mitochondrial membrane respiratory chain NADH dehydrogenase (Complex I) that is believed to belong to the minimal assembly required for catalysis. Complex I functions in the transfer of electrons from NADH to the respiratory chain. The immediate electron acceptor for the enzyme is believed to be ubiquinone. The sequence is that of NADH-ubiquinone oxidoreductase chain 6 (MT-ND6) from Aethia pygmaea (Whiskered auklet).